The primary structure comprises 487 residues: MSWKDTAEPLLVRMPAVQRPEGHVPFKRKLTWTGGVLLLYFFLTNVKLFGLDIDASQQVFGRFSSILASGQGSIMQLGIGPIVTASIVLQLLGGADLLGLNTQDDPRDQILYQGLQKLLVLVMICLTGLPMVFAGGFLPADTAVANSLGIGTAGVQWLIFAQMFVGGVLILFMDEVISKWGVGSGIGLFIVAGVSQRLVGGLLTAPFLGNSEGIIYTWYLFITGERGTGPVLAADGLQTVLLQGELLGLFTTVLIFAVVVYAESVRVEIPLSNARVKGARGRFPVKLIYASVLPMILVRALQANIQFLGRILNAQLGSMPAFLGTYANGQPTGGLFYFLAPIQSRGDWMWWLEGTAQPVWQILTRVGIDLFVMLVGGAVFAVFWVETTDMGPEATAKQIHNSGMQIPGFRQNVGVIEKVLERYIPQVTVIGGALVGLLAVMANMLGTIGGVSGTGLLLTVSITYKLYEEIAEEQLMEMHPMMRQMFG.

Residues 1-20 (MSWKDTAEPLLVRMPAVQRP) lie on the Cytoplasmic side of the membrane. Residues 21-47 (EGHVPFKRKLTWTGGVLLLYFFLTNVK) traverse the membrane as a helical segment. The Extracellular segment spans residues 48–59 (LFGLDIDASQQV). Residues 60–67 (FGRFSSIL) constitute an intramembrane region (helical). Residues 60 to 88 (FGRFSSILASGQGSIMQLGIGPIVTASIV) form a discontinuously helical membrane-spanning segment. The stretch at 68–79 (ASGQGSIMQLGI) is an intramembrane region. The helical intramembrane region spans 80-88 (GPIVTASIV). Residues 89–110 (LQLLGGADLLGLNTQDDPRDQI) are Cytoplasmic-facing. The chain crosses the membrane as a helical span at residues 111–135 (LYQGLQKLLVLVMICLTGLPMVFAG). Topologically, residues 136 to 153 (GFLPADTAVANSLGIGTA) are extracellular. A helical transmembrane segment spans residues 154–178 (GVQWLIFAQMFVGGVLILFMDEVIS). Residues 179 to 184 (KWGVGS) lie on the Cytoplasmic side of the membrane. A helical membrane pass occupies residues 185–203 (GIGLFIVAGVSQRLVGGLL). At 204-244 (TAPFLGNSEGIIYTWYLFITGERGTGPVLAADGLQTVLLQG) the chain is on the extracellular side. A helical membrane pass occupies residues 245-266 (ELLGLFTTVLIFAVVVYAESVR). Residues 267 to 291 (VEIPLSNARVKGARGRFPVKLIYAS) lie on the Cytoplasmic side of the membrane. The helical transmembrane segment at 292-313 (VLPMILVRALQANIQFLGRILN) threads the bilayer. Topologically, residues 314 to 364 (AQLGSMPAFLGTYANGQPTGGLFYFLAPIQSRGDWMWWLEGTAQPVWQILT) are extracellular. A helical transmembrane segment spans residues 365–384 (RVGIDLFVMLVGGAVFAVFW). The Cytoplasmic segment spans residues 385–427 (VETTDMGPEATAKQIHNSGMQIPGFRQNVGVIEKVLERYIPQV). Residues 428 to 446 (TVIGGALVGLLAVMANMLG) traverse the membrane as a helical segment. Over 447–451 (TIGGV) the chain is Extracellular. Residues 452–466 (SGTGLLLTVSITYKL) traverse the membrane as a helical segment. Topologically, residues 467–487 (YEEIAEEQLMEMHPMMRQMFG) are cytoplasmic.

This sequence belongs to the SecY/SEC61-alpha family. Component of the Sec protein translocase complex. Heterotrimer consisting of alpha (SecY), beta (SecG) and gamma (SecE) subunits. The heterotrimers can form oligomers, although 1 heterotrimer is thought to be able to translocate proteins. Interacts with the ribosome. May interact with SecDF, and other proteins may be involved.

The protein localises to the cell membrane. The central subunit of the protein translocation channel SecYEG. Consists of two halves formed by TMs 1-5 and 6-10. These two domains form a lateral gate at the front which open onto the bilayer between TMs 2 and 7, and are clamped together by SecE at the back. The channel is closed by both a pore ring composed of hydrophobic SecY resides and a short helix (helix 2A) on the extracellular side of the membrane which forms a plug. The plug probably moves laterally to allow the channel to open. The ring and the pore may move independently. The chain is Protein translocase subunit SecY from Haloarcula marismortui (strain ATCC 43049 / DSM 3752 / JCM 8966 / VKM B-1809) (Halobacterium marismortui).